The following is a 46-amino-acid chain: Aspartate aminotransferase 1 (46 aa).

It belongs to the class-I pyridoxal-phosphate-dependent aminotransferase family. In terms of assembly, homodimer. The cofactor is pyridoxal 5'-phosphate.

The enzyme catalyses L-aspartate + 2-oxoglutarate = oxaloacetate + L-glutamate. In terms of biological role, important for the metabolism of amino acids and Krebs-cycle related organic acids. In plants, it is involved in nitrogen metabolism and in aspects of carbon and energy metabolism. This chain is Aspartate aminotransferase 1, found in Pseudotsuga menziesii (Douglas-fir).